Consider the following 842-residue polypeptide: Protein P (842 aa).

The segment at 1–177 (MPLSYQHFRR…FCGSPYSWEQ (177 aa)) is terminal protein domain (TP). The spacer stretch occupies residues 178–345 (ELHHGAFLDG…YCLTHLVNLL (168 aa)). The disordered stretch occupies residues 186–273 (DGPSRMGEES…AKNIASRSAS (88 aa)). Residues 223–239 (GPQSQQRPLDGSQQGRS) are compositionally biased toward polar residues. Residues 346–689 (EDWGPCTEHG…YLNLYPVARQ (344 aa)) form a polymerase/reverse transcriptase domain (RT) region. The Reverse transcriptase domain maps to 356 to 599 (KHHIRIPRTP…YSLNFMGYVI (244 aa)). Positions 428, 550, and 551 each coordinate Mg(2+).

This sequence belongs to the hepadnaviridae P protein family.

It catalyses the reaction DNA(n) + a 2'-deoxyribonucleoside 5'-triphosphate = DNA(n+1) + diphosphate. It carries out the reaction Endonucleolytic cleavage to 5'-phosphomonoester.. Activated by host HSP70 and HSP40 in vitro to be able to bind the epsilon loop of the pgRNA. Because deletion of the RNase H region renders the protein partly chaperone-independent, the chaperones may be needed indirectly to relieve occlusion of the RNA-binding site by this domain. Inhibited by several reverse-transcriptase inhibitors: Lamivudine, Adefovir and Entecavir. In terms of biological role, multifunctional enzyme that converts the viral RNA genome into dsDNA in viral cytoplasmic capsids. This enzyme displays a DNA polymerase activity that can copy either DNA or RNA templates, and a ribonuclease H (RNase H) activity that cleaves the RNA strand of RNA-DNA heteroduplexes in a partially processive 3'- to 5'-endonucleasic mode. Neo-synthesized pregenomic RNA (pgRNA) are encapsidated together with the P protein, and reverse-transcribed inside the nucleocapsid. Initiation of reverse-transcription occurs first by binding the epsilon loop on the pgRNA genome, and is initiated by protein priming, thereby the 5'-end of (-)DNA is covalently linked to P protein. Partial (+)DNA is synthesized from the (-)DNA template and generates the relaxed circular DNA (RC-DNA) genome. After budding and infection, the RC-DNA migrates in the nucleus, and is converted into a plasmid-like covalently closed circular DNA (cccDNA). The activity of P protein does not seem to be necessary for cccDNA generation, and is presumably released from (+)DNA by host nuclear DNA repair machinery. This chain is Protein P, found in Homo sapiens (Human).